The following is a 1153-amino-acid chain: Integrin alpha-M (1153 aa).

The first 16 residues, 1 to 16 (MTLKALLVTALALCHG), serve as a signal peptide directing secretion. The Extracellular portion of the chain corresponds to 17-1105 (FNLDTEHPMT…TKVEPYEVHN (1089 aa)). FG-GAP repeat units lie at residues 18–75 (NLDT…RCHP) and 76–135 (IPLQ…RPPQ). A glycan (N-linked (GlcNAc...) asparagine) is linked at asparagine 58. The cysteines at positions 66 and 73 are disulfide-linked. A glycan (N-linked (GlcNAc...) asparagine) is linked at asparagine 86. Cysteine 105 and cysteine 123 are joined by a disulfide. Positions 164–338 (IDFQKMKEFV…QEKIFAIEGT (175 aa)) constitute a VWFA domain. 5 FG-GAP repeats span residues 339 to 390 (QTGS…VTFI), 391 to 442 (NTTR…FGTW), 443 to 503 (EPHT…RARW), 506 to 564 (EALL…ASLS), and 569 to 629 (HRII…FSPK). Asparagine 391 carries N-linked (GlcNAc...) asparagine glycosylation. Ca(2+) is bound by residues aspartate 465, aspartate 467, aspartate 469, asparagine 471, asparagine 473, aspartate 529, asparagine 531, aspartate 533, aspartate 537, aspartate 592, aspartate 596, and aspartate 600. Cysteine 654 and cysteine 711 are joined by a disulfide. Asparagine 696, asparagine 734, asparagine 772, asparagine 801, asparagine 881, asparagine 907, asparagine 941, asparagine 980, asparagine 994, and asparagine 1022 each carry an N-linked (GlcNAc...) asparagine glycan. Cysteines 770 and 776 form a disulfide. Intrachain disulfides connect cysteine 999–cysteine 1023 and cysteine 1028–cysteine 1033. N-linked (GlcNAc...) asparagine glycosylation is found at asparagine 1045, asparagine 1051, and asparagine 1076. Residues 1106–1129 (PVPLIVGSSIGGLVLLALITAGLY) traverse the membrane as a helical segment. Residues 1130–1153 (KLGFFKRQYKDMMNEAAPQDAPPQ) lie on the Cytoplasmic side of the membrane. The short motif at 1132–1136 (GFFKR) is the GFFKR motif element.

Belongs to the integrin alpha chain family. Heterodimer of an alpha and a beta subunit. ITGAM associates with ITGB2. Found in a complex with CD177 and ITGB2/CD18. Interacts with JAM3. Interacts with THBD. Interacts with complement factor H/CFH; this interaction mediates adhesion of neutrophils to pathogens leading to pathogen clearance. Interacts with TMEM268; this interaction inhibits ITGAM degradation via the endosome-lysosome pathway. Predominantly expressed in monocytes and granulocytes. Expressed in a subset of peritoneal mast cells. Expressed in microglia (at protein level).

The protein localises to the cell membrane. It localises to the membrane raft. Its function is as follows. Integrin ITGAM/ITGB2 is implicated in various adhesive interactions of monocytes, macrophages and granulocytes as well as in mediating the uptake of complement-coated particles and pathogens. It is identical with CR-3, the receptor for the iC3b fragment of the third complement component. It probably recognizes the R-G-D peptide in C3b. Integrin ITGAM/ITGB2 is also a receptor for fibrinogen, factor X and ICAM1. It recognizes P1 and P2 peptides of fibrinogen gamma chain. Regulates neutrophil migration. In association with beta subunit ITGB2/CD18, required for CD177-PRTN3-mediated activation of TNF primed neutrophils. May regulate phagocytosis-induced apoptosis in extravasated neutrophils. May play a role in mast cell development. Required with TYROBP/DAP12 in microglia to control production of microglial superoxide ions which promote the neuronal apoptosis that occurs during brain development. This Mus musculus (Mouse) protein is Integrin alpha-M (Itgam).